A 191-amino-acid chain; its full sequence is 3-isopropylmalate dehydratase small subunit (191 aa).

The protein belongs to the LeuD family. LeuD type 1 subfamily. In terms of assembly, heterodimer of LeuC and LeuD.

The enzyme catalyses (2R,3S)-3-isopropylmalate = (2S)-2-isopropylmalate. Its pathway is amino-acid biosynthesis; L-leucine biosynthesis; L-leucine from 3-methyl-2-oxobutanoate: step 2/4. Its function is as follows. Catalyzes the isomerization between 2-isopropylmalate and 3-isopropylmalate, via the formation of 2-isopropylmaleate. This chain is 3-isopropylmalate dehydratase small subunit, found in Anaeromyxobacter dehalogenans (strain 2CP-C).